The primary structure comprises 94 residues: Small ribosomal subunit protein uS19 (94 aa).

It belongs to the universal ribosomal protein uS19 family.

Functionally, protein S19 forms a complex with S13 that binds strongly to the 16S ribosomal RNA. This Desulforamulus reducens (strain ATCC BAA-1160 / DSM 100696 / MI-1) (Desulfotomaculum reducens) protein is Small ribosomal subunit protein uS19.